The chain runs to 301 residues: Glycine--tRNA ligase alpha subunit (301 aa).

It belongs to the class-II aminoacyl-tRNA synthetase family. As to quaternary structure, tetramer of two alpha and two beta subunits.

The protein localises to the cytoplasm. It catalyses the reaction tRNA(Gly) + glycine + ATP = glycyl-tRNA(Gly) + AMP + diphosphate. The polypeptide is Glycine--tRNA ligase alpha subunit (Shewanella loihica (strain ATCC BAA-1088 / PV-4)).